Consider the following 363-residue polypeptide: 3-dehydroquinate synthase (363 aa).

NAD(+) contacts are provided by residues 134–135, lysine 147, lysine 156, and 174–177; these read TT and TLIT. 3 residues coordinate Zn(2+): glutamate 189, histidine 254, and histidine 271.

This sequence belongs to the sugar phosphate cyclases superfamily. Dehydroquinate synthase family. NAD(+) is required as a cofactor. Co(2+) serves as cofactor. It depends on Zn(2+) as a cofactor.

It localises to the cytoplasm. The enzyme catalyses 7-phospho-2-dehydro-3-deoxy-D-arabino-heptonate = 3-dehydroquinate + phosphate. The protein operates within metabolic intermediate biosynthesis; chorismate biosynthesis; chorismate from D-erythrose 4-phosphate and phosphoenolpyruvate: step 2/7. Functionally, catalyzes the conversion of 3-deoxy-D-arabino-heptulosonate 7-phosphate (DAHP) to dehydroquinate (DHQ). The protein is 3-dehydroquinate synthase of Prochlorococcus marinus subsp. pastoris (strain CCMP1986 / NIES-2087 / MED4).